Here is a 72-residue protein sequence, read N- to C-terminus: Large ribosomal subunit protein bL28 (72 aa).

Belongs to the bacterial ribosomal protein bL28 family.

This Chlorobium phaeobacteroides (strain BS1) protein is Large ribosomal subunit protein bL28.